The sequence spans 118 residues: UPF0148 protein LS215_1455 (118 aa).

Belongs to the UPF0148 family.

The sequence is that of UPF0148 protein LS215_1455 from Saccharolobus islandicus (strain L.S.2.15 / Lassen #1) (Sulfolobus islandicus).